A 230-amino-acid polypeptide reads, in one-letter code: Protein FAM3A (230 aa).

The signal sequence occupies residues 1-33 (MRLAGPLRIVALIIIMGLTWILVTILLGGPGVG). Cystine bridges form between Cys-59–Cys-87 and Cys-65–Cys-222. In terms of domain architecture, GG-type lectin spans 68–226 (EHLSFRIVSG…LEMEGCIPRR (159 aa)).

Belongs to the FAM3 family.

It is found in the secreted. The chain is Protein FAM3A (Fam3a) from Mus musculus (Mouse).